The primary structure comprises 1565 residues: Major cell-surface adhesin PAc (1565 aa).

A signal peptide spans 1-38 (MKVKKTYGFRKSKISKTLCGAVLGTVAAVSVAGQKVFA). A compositionally biased stretch (low complexity) spans 42 to 54 (TTTSDVDTKVVGT). Residues 42–81 (TTTSDVDTKVVGTQTGNPATNLPEAQGSASKEAEQSQTKL) form a disordered region. Residues 72–81 (KEAEQSQTKL) show a composition bias toward basic and acidic residues. Ag I/II A repeat units lie at residues 146-220 (KKTT…QKTN), 221-302 (AANQ…QEAN), 303-384 (AANE…KKAN), and 385-466 (AANE…QKDL). A heptad repeats of Y-[EQ]-X-X-L-A-X region spans residues 203 to 448 (EAKLAQYQAD…KRNADAKADY (246 aa)). The segment at 461–834 (KYQKDLADYP…VNVPKVTKEK (374 aa)) is V-region (lectin-like). 2 disordered regions span residues 827–985 (VPKV…PTPP) and 1486–1511 (NTVK…PRTS). Residues 848-887 (TYETEKPLKPAPVAPNYEKEPTPPTRTPDQAEPNKPTPPT) form a P1 repeat. A P2 repeat occupies 888–926 (YETEKPLEPAPVEPSYEAEPTPPTRTPDQAEPNKPTPPT). The stretch at 927 to 964 (YETEKPLEPAPVEPSYEAEPTPPTPTPDQPEPNKPVEP) is one P3 repeat. Positions 946 to 961 (PTPPTPTPDQPEPNKP) are enriched in pro residues. Positions 1532–1536 (LPNTG) match the LPXTG sorting signal motif. Residue Thr-1535 is modified to Pentaglycyl murein peptidoglycan amidated threonine. A propeptide spans 1536–1565 (GVTNNAYMPLLGIIGLVTSFSLLGLKAKKD) (removed by sortase).

The protein belongs to the antigen I/II family.

The protein localises to the secreted. It is found in the cell wall. Surface protein antigen implicated in dental caries. This is Major cell-surface adhesin PAc from Streptococcus mutans.